We begin with the raw amino-acid sequence, 582 residues long: MEPPTSHVTNAFSDSDSASVEEGDADADADVEALRRLSDNLAAAFRSPEDFAFLADARIAVPGGGGGGGDLRVHRCVLSARSPFLRGVFARRAAAAAGGGGEDGSERLELRELLGGGGEEVEVGYEALRLVLDYLYSGRVGDLPKAACLCVDEDCAHVGCHPAVAFMAQVLFAASTFQVAELTNLFQRRLLDVLDKVEVDNLLLILSVANLCNKSCMKLLERCLDMVVRSNLDMITLEKSLPPDVIKQIIDARLSLGLISPENKGFPNKHVRRIHRALDSDDVELVRMLLTEGQTNLDDAFALHYAVEHCDSKITTELLDLALADVNHRNPRGYTVLHIAARRREPKIIVSLLTKGARPADVTFDGRKAVQISKRLTKQGDYFGVTEEGKPSPKDRLCIEILEQAERRDPQLGEASVSLAMAGESLRGRLLYLENRVALARIMFPMEARVAMDIAQVDGTLEFNLGSGANPPPERQRTTVDLNESPFIMKEEHLARMTALSKTVELGKRFFPRCSNVLDKIMDDETDPVSLGRDTSAEKRKRFHDLQDVLQKAFHEDKEENDRSGLSSSSSSTSIGAIRPRR.

Positions 1-12 are enriched in polar residues; sequence MEPPTSHVTNAF. Positions 1–27 are disordered; it reads MEPPTSHVTNAFSDSDSASVEEGDADA. A BTB domain is found at 55-140; the sequence is ADARIAVPGG…VLDYLYSGRV (86 aa). The segment at 147–161 adopts a C2HC NPR-type zinc-finger fold; sequence ACLCVDEDCAHVGCH. Zn(2+) contacts are provided by Cys150, Cys155, His157, and Cys160. ANK repeat units lie at residues 229–258, 269–299, 301–328, and 332–361; these read RSNL…SLGL, KHVR…NLDD, FALH…DVNH, and RGYT…RPAD. A salicylic acid-binding core (SBC) region spans residues 391–526; it reads PSPKDRLCIE…VLDKIMDDET (136 aa). Arg436 lines the salicylate pocket. Disordered regions lie at residues 525–544 and 551–582; these read ETDP…KRFH and QKAF…RPRR. Residues 553–563 are compositionally biased toward basic and acidic residues; that stretch reads AFHEDKEENDR. The segment covering 564–574 has biased composition (low complexity); the sequence is SGLSSSSSSTS.

This sequence belongs to the plant 'ANKYRIN-BTB/POZ' family. 'NPR1-like' subfamily. As to quaternary structure, oligomer in an uninduced state; disulfide-linked. Forms activated monomer upon changes in cellular redox potential. Interacts with TGA2.2. Interacts with NRR.

Its subcellular location is the cytoplasm. The protein resides in the nucleus. It localises to the nuclear body. It functions in the pathway protein modification; protein ubiquitination. Salicylic acid (SA)-binding substrate-specific adapter of an E3 ubiquitin-protein ligase complex (CUL3-RBX1-BTB) which mediates the ubiquitination and subsequent proteasomal degradation of target proteins. Transcription cofactor that represses gene expression in the absence of salicylic acid (SA), when attached to negative cis-elements (W-box) with WRKY transcription factors, but stimulates gene expression upon activation by SA, when sumoylated and attached to positive cis-elements (as-1) with TGA transcription factors, thus confering immunity through a series of gene regulations ending in a significant increase in antimicrobial and defense genes expression. Key positive factor of disease resistance. Involved in defense response against the bacterial blight disease caused by Xanthomonas oryzae pv. oryzae (Xoo). Plants over-expressing NPR1/NH1 acquire high levels of resistance to Xoo, express constitutively defense genes and develop lesion-mimic spots on leaves at pre-flowering stage. Involved in basal resistance to the blast pathogen Magnaporthe oryzae. Plants over-expressing NPR1/NH1 have increased resistance to M.oryzae infection. Plays an essential role in benzothiadiazole (BTH)-induced resistance to the blast fungus disease caused by Magnaporthe oryzae. Functions as a transcriptional coactivator of TGA2.1 and LG2 in vitro. Involved in defense response against herbivore. Plants silencing NPR1/NH1 have increased herbivore-induced trypsin proteinase inhibitors and volatiles, which reduces the performance of the striped stem borer (SSB) Chilo suppressalis. In Oryza sativa subsp. indica (Rice), this protein is BTB/POZ domain and ankyrin repeat-containing protein NPR1.